A 127-amino-acid chain; its full sequence is Large ribosomal subunit protein bL20 (127 aa).

It belongs to the bacterial ribosomal protein bL20 family.

In terms of biological role, binds directly to 23S ribosomal RNA and is necessary for the in vitro assembly process of the 50S ribosomal subunit. It is not involved in the protein synthesizing functions of that subunit. This is Large ribosomal subunit protein bL20 (rplT) from Mycoplasma pneumoniae (strain ATCC 29342 / M129 / Subtype 1) (Mycoplasmoides pneumoniae).